The following is a 777-amino-acid chain: NAD(P)H-quinone oxidoreductase subunit 5, chloroplastic (777 aa).

Helical transmembrane passes span 9–29, 40–60, 89–109, 125–145, 147–167, 185–205, 220–240, 259–279, 290–312, 328–348, 355–375, 397–417, 426–446, 550–570, 604–624, and 731–751; these read WIIP…LLLF, WSFP…YLSI, IDPL…LVLF, FAYL…SNLI, IYIF…FWFT, GDFG…SFEF, NQVH…GAVA, TPIS…FLVA, YIMN…LALA, LGYM…FHLI, ALLF…VGYS, TAFL…CFWS, WLYS…TAFY, LFSL…GIPF, FVTN…IATF, and IFIF…FFVL.

Belongs to the complex I subunit 5 family. As to quaternary structure, NDH is composed of at least 16 different subunits, 5 of which are encoded in the nucleus.

It localises to the plastid. It is found in the chloroplast thylakoid membrane. It carries out the reaction a plastoquinone + NADH + (n+1) H(+)(in) = a plastoquinol + NAD(+) + n H(+)(out). The enzyme catalyses a plastoquinone + NADPH + (n+1) H(+)(in) = a plastoquinol + NADP(+) + n H(+)(out). NDH shuttles electrons from NAD(P)H:plastoquinone, via FMN and iron-sulfur (Fe-S) centers, to quinones in the photosynthetic chain and possibly in a chloroplast respiratory chain. The immediate electron acceptor for the enzyme in this species is believed to be plastoquinone. Couples the redox reaction to proton translocation, and thus conserves the redox energy in a proton gradient. This Oenothera elata subsp. hookeri (Hooker's evening primrose) protein is NAD(P)H-quinone oxidoreductase subunit 5, chloroplastic (ndhF).